The sequence spans 224 residues: Small ribosomal subunit protein uS3 (224 aa).

Positions 39-107 constitute a KH type-2 domain; it reads IREFLKKKPS…DVWVEIAEVK (69 aa).

This sequence belongs to the universal ribosomal protein uS3 family. Part of the 30S ribosomal subunit. Forms a tight complex with proteins S10 and S14.

Its function is as follows. Binds the lower part of the 30S subunit head. Binds mRNA in the 70S ribosome, positioning it for translation. The protein is Small ribosomal subunit protein uS3 of Chlamydia muridarum (strain MoPn / Nigg).